The sequence spans 263 residues: Shikimate dehydrogenase (NADP(+)) (263 aa).

Residues 16-18 and threonine 65 contribute to the shikimate site; that span reads SKS. Lysine 69 serves as the catalytic Proton acceptor. Shikimate-binding residues include asparagine 90 and aspartate 105. Residues 125 to 129 and leucine 208 each bind NADP(+); that span reads GSGGS. Tyrosine 210 lines the shikimate pocket. An NADP(+)-binding site is contributed by glycine 230.

This sequence belongs to the shikimate dehydrogenase family. As to quaternary structure, homodimer.

The catalysed reaction is shikimate + NADP(+) = 3-dehydroshikimate + NADPH + H(+). It functions in the pathway metabolic intermediate biosynthesis; chorismate biosynthesis; chorismate from D-erythrose 4-phosphate and phosphoenolpyruvate: step 4/7. Involved in the biosynthesis of the chorismate, which leads to the biosynthesis of aromatic amino acids. Catalyzes the reversible NADPH linked reduction of 3-dehydroshikimate (DHSA) to yield shikimate (SA). This chain is Shikimate dehydrogenase (NADP(+)), found in Helicobacter pylori (strain G27).